The sequence spans 106 residues: Large ribosomal subunit protein P1B (106 aa).

Position 2 is an N-acetylserine (S2). Over residues 69 to 82 (AGAASGAAAAGGDA) the composition is skewed to low complexity. Positions 69–106 (AGAASGAAAAGGDAAAEEEKEEEAAEESDDDMGFGLFD) are disordered. Residues 83 to 100 (AAEEEKEEEAAEESDDDM) are compositionally biased toward acidic residues. A Phosphoserine modification is found at S96.

This sequence belongs to the eukaryotic ribosomal protein P1/P2 family. Component of the large ribosomal subunit (LSU). Mature yeast ribosomes consist of a small (40S) and a large (60S) subunit. The 40S small subunit contains 1 molecule of ribosomal RNA (18S rRNA) and 33 different proteins (encoded by 57 genes). The large 60S subunit contains 3 rRNA molecules (25S, 5.8S and 5S rRNA) and 46 different proteins (encoded by 81 genes). The 5 acidic ribosomal P-proteins form the stalk structure of the 60S subunit. They are organized as a pentameric complex in which uL10/P0 interacts with 2 heterodimers, P1A-P2B and P1B-P2A.

It localises to the cytoplasm. Its function is as follows. Component of the ribosome, a large ribonucleoprotein complex responsible for the synthesis of proteins in the cell. The small ribosomal subunit (SSU) binds messenger RNAs (mRNAs) and translates the encoded message by selecting cognate aminoacyl-transfer RNA (tRNA) molecules. The large subunit (LSU) contains the ribosomal catalytic site termed the peptidyl transferase center (PTC), which catalyzes the formation of peptide bonds, thereby polymerizing the amino acids delivered by tRNAs into a polypeptide chain. The nascent polypeptides leave the ribosome through a tunnel in the LSU and interact with protein factors that function in enzymatic processing, targeting, and the membrane insertion of nascent chains at the exit of the ribosomal tunnel. This Saccharomyces cerevisiae (strain ATCC 204508 / S288c) (Baker's yeast) protein is Large ribosomal subunit protein P1B.